Consider the following 394-residue polypeptide: Phosphoglycerate kinase (394 aa).

Substrate-binding positions include 21-23 (DFN), Arg-36, 59-62 (HLGR), Arg-118, and Arg-151. Phosphoserine is present on Ser-183. 2 residues coordinate ATP: Lys-201 and Gly-292. Thr-299 is modified (phosphothreonine). Residues Glu-323 and 350–353 (GGDS) contribute to the ATP site.

It belongs to the phosphoglycerate kinase family. In terms of assembly, monomer.

Its subcellular location is the cytoplasm. It catalyses the reaction (2R)-3-phosphoglycerate + ATP = (2R)-3-phospho-glyceroyl phosphate + ADP. Its pathway is carbohydrate degradation; glycolysis; pyruvate from D-glyceraldehyde 3-phosphate: step 2/5. This is Phosphoglycerate kinase from Bacillus cereus (strain G9842).